A 360-amino-acid polypeptide reads, in one-letter code: Mannose-1-phosphate guanylyltransferase catalytic subunit beta (360 aa).

Positions 2–222 (KALILVGGYG…QGFWMDIGQP (221 aa)) are substrate-binding domain. Position 110 (D110) interacts with GDP-alpha-D-mannose. D110 contributes to the Mg(2+) binding site. Residue K162 is part of the active site. Position 218 (D218) interacts with GDP-alpha-D-mannose. D218 lines the Mg(2+) pocket. The segment at 245–360 (CSGPGIVGNV…ESVPEPRIIM (116 aa)) is hexapeptide repeat domain.

Belongs to the transferase hexapeptide repeat family. In terms of assembly, component of the GMPPA-GMPPB mannose-1-phosphate guanylyltransferase complex composed of 4 GMPPA subunits and 8 GMPPB subunits; the complex is organized into three layers, a central layer made up of 2 GMPPA dimers sandwiched between two layers each made up of 2 GMPPB dimers. GMPPB catalytic activity is reduced when part of the complex and binding of GDP-alpha-D-Mannose by GMPPA induces allosteric feedback inhibition of GMPPB. Mg(2+) is required as a cofactor. In terms of tissue distribution, ubiquitously expressed, including in brain and skeletal muscle. Weakly expressed with highest expression in skeletal muscle, brain and gonads.

The protein resides in the cytoplasm. It carries out the reaction alpha-D-mannose 1-phosphate + GTP + H(+) = GDP-alpha-D-mannose + diphosphate. Its pathway is nucleotide-sugar biosynthesis; GDP-alpha-D-mannose biosynthesis; GDP-alpha-D-mannose from alpha-D-mannose 1-phosphate (GTP route): step 1/1. Its activity is regulated as follows. Enzyme activity is reduced by incorporation into the GMPPA-GMPPB mannose-1-phosphate guanylyltransferase complex. Allosterically inhibited, when part of the GMPPA-GMPPB complex, by GDP-alpha-D-mannose binding to GMPPA. Its function is as follows. Catalytic subunit of the GMPPA-GMPPB mannose-1-phosphate guanylyltransferase complex. Catalyzes the formation of GDP-mannose, an essential precursor of glycan moieties of glycoproteins and glycolipids. Can catalyze the reverse reaction in vitro. Together with GMPPA regulates GDP-alpha-D-mannose levels. The polypeptide is Mannose-1-phosphate guanylyltransferase catalytic subunit beta (Homo sapiens (Human)).